The chain runs to 429 residues: Adenylosuccinate synthetase (429 aa).

GTP is bound by residues 13 to 19 and 41 to 43; these read GDEGKGK and GHT. Asp-14 (proton acceptor) is an active-site residue. Mg(2+)-binding residues include Asp-14 and Gly-41. IMP contacts are provided by residues 14-17, 39-42, Thr-130, Arg-144, Gln-225, Thr-240, and Arg-304; these read DEGK and NAGH. Catalysis depends on His-42, which acts as the Proton donor. 300-306 contacts substrate; sequence ATTGRAR. GTP is bound by residues Arg-306, 332–334, and 414–416; these read KLD and STG.

Belongs to the adenylosuccinate synthetase family. In terms of assembly, homodimer. The cofactor is Mg(2+).

It is found in the cytoplasm. The enzyme catalyses IMP + L-aspartate + GTP = N(6)-(1,2-dicarboxyethyl)-AMP + GDP + phosphate + 2 H(+). It functions in the pathway purine metabolism; AMP biosynthesis via de novo pathway; AMP from IMP: step 1/2. Its function is as follows. Plays an important role in the de novo pathway of purine nucleotide biosynthesis. Catalyzes the first committed step in the biosynthesis of AMP from IMP. This Acidithiobacillus ferrooxidans (Thiobacillus ferrooxidans) protein is Adenylosuccinate synthetase.